The following is a 735-amino-acid chain: MNGDTRAAVVTSPPPTTAPHKERYFDRVDENNPEYLRERNMAPDLRQDFNMMEQKKRVSMILQSPAFCEELESMIQEQFKKGKNPTGLLALQQIADFMTASVPNVYPAAPQGGMAALNMSLGMVTPVNDLRGSDSIAYDKGEKLLRCKLAAFYRLADLFGWSQLIYNHITTRVNSEQEHFLIVPFGLLYSEVTASSLVKVNLQGDIVDRGSTNLGVNQAGFTLHSAIYAARPDAKCIVHIHTPAGAAVSAMKCGLLPISPEALSLGEVAYHDYHGILVDEEEKILIQKNLGPKSKVLILRNHGLVSVGESVEEAFYYIHNLVVACEIQVRTLASAGGPDNLVLLDPGKYKAKSRSPGTPAGEGSGSPPKWQIGEQEFEALMRMLDNLGYRTGYPYRYPALRERSKKYSDVEVPASVTGHSFASDGDSGTCSPLRHSFQKQQREKTRWLNSGRGDDASEEGQNGSSPKSKTKWTKEDGHRTSTSAVPNLFVPLNTNPKEVQEMRNKIREQNLQDIKTAGPQSQVLCGVMMDRSLVQGELVTASKAIIEKEYQPHVIVSTTGPNPFNTLTDRELEEYRREVERKQKGSEENLDETREQKEKSPPDQSAVPNTPPSTPVKLEGGLPQEPTSRDGSDATTSKPTPPDLSPDEPSEALAFPTVAEEAHASPDTTQPLAEADPEPASASAPGAEEVASPATEEGSPMDPGSDGSPGKSPSKKKKKFRTPSFLKKSKKKSDS.

Methionine 1 is subject to N-acetylmethionine. Residues 1–11 (MNGDTRAAVVT) are compositionally biased toward low complexity. Residues 1–21 (MNGDTRAAVVTSPPPTTAPHK) form a disordered region. At serine 12 the chain carries Phosphoserine. The residue at position 59 (serine 59) is a Phosphoserine; by PKA. The residue at position 64 (serine 64) is a Phosphoserine. Threonine 331 is subject to Phosphothreonine. Serine 334, serine 353, and serine 355 each carry phosphoserine. Threonine 358 carries the phosphothreonine modification. Phosphoserine occurs at positions 364 and 366. Serine 408 carries the post-translational modification Phosphoserine; by PKA. Disordered stretches follow at residues 418–486 (GHSF…SAVP) and 576–735 (RREV…KSDS). Position 427 is a phosphoserine (serine 427). The residue at position 429 (threonine 429) is a Phosphothreonine. Position 431 is a phosphoserine (serine 431). Residue serine 436 is modified to Phosphoserine; by PKA. Threonine 445 carries the phosphothreonine; by ROCK2 modification. Phosphoserine occurs at positions 464 and 465. At threonine 480 the chain carries Phosphothreonine; by ROCK2. The residue at position 481 (serine 481) is a Phosphoserine; by PKA. Basic and acidic residues predominate over residues 576–601 (RREVERKQKGSEENLDETREQKEKSP). Phosphoserine occurs at positions 586, 600, and 605. Threonine 610 carries the phosphothreonine modification. Serine 613 is subject to Phosphoserine. Phosphothreonine is present on threonine 614. A compositionally biased stretch (low complexity) spans 678–712 (EPASASAPGAEEVASPATEEGSPMDPGSDGSPGKS). Phosphoserine occurs at positions 705, 708, and 712. Residues 713-735 (PSKKKKKFRTPSFLKKSKKKSDS) show a composition bias toward basic residues. Serine 714 is subject to Phosphoserine; by PKC. Residues 715–732 (KKKKKFRTPSFLKKSKKK) form an interaction with calmodulin region. Serine 724 bears the Phosphoserine; by PKA and PKC mark.

This sequence belongs to the aldolase class II family. Adducin subfamily. Heterodimer of an alpha and a beta subunit or an alpha and a gamma subunit.

Its subcellular location is the cytoplasm. The protein resides in the cytoskeleton. It is found in the cell membrane. Membrane-cytoskeleton-associated protein that promotes the assembly of the spectrin-actin network. Binds to calmodulin. The sequence is that of Alpha-adducin (Add1) from Rattus norvegicus (Rat).